The following is a 435-amino-acid chain: Serine carboxypeptidase-like 12 (435 aa).

The first 21 residues, 1-21, serve as a signal peptide directing secretion; the sequence is MKSTPKLLLLLLFIINHHVDS. 3 cysteine pairs are disulfide-bonded: Cys-80–Cys-323, Cys-244–Cys-258, and Cys-282–Cys-289. An N-linked (GlcNAc...) asparagine glycan is attached at Asn-101. Ser-176 is an active-site residue. 3 N-linked (GlcNAc...) asparagine glycosylation sites follow: Asn-313, Asn-336, and Asn-344. Asp-360 is an active-site residue. A glycan (N-linked (GlcNAc...) asparagine) is linked at Asn-376. His-413 is an active-site residue. Residue Asn-420 is glycosylated (N-linked (GlcNAc...) asparagine).

It belongs to the peptidase S10 family. Expressed in roots.

The protein localises to the secreted. Functionally, probable carboxypeptidase. The sequence is that of Serine carboxypeptidase-like 12 (SCPL12) from Arabidopsis thaliana (Mouse-ear cress).